The chain runs to 112 residues: MPMTTTSTFETHIIEAYRGPVFGETIYGANVLRDISAVFTDVVGGRAGDYEKVLIRGRNAALAEMSERAKQLGANAVIGIRFDYSTVGRSMLMICSSGTAVIANPRIPDASH.

The protein belongs to the UPF0145 family.

This chain is UPF0145 protein RB3016, found in Rhodopirellula baltica (strain DSM 10527 / NCIMB 13988 / SH1).